The following is a 77-amino-acid chain: Small ribosomal subunit protein uS17c (77 aa).

It belongs to the universal ribosomal protein uS17 family. In terms of assembly, part of the 30S ribosomal subunit.

It is found in the plastid. Its subcellular location is the chloroplast. Its function is as follows. One of the primary rRNA binding proteins, it binds specifically to the 5'-end of 16S ribosomal RNA. The sequence is that of Small ribosomal subunit protein uS17c (rps17) from Cyanidium caldarium (Red alga).